Consider the following 510-residue polypeptide: ATP synthase subunit alpha (510 aa).

170–177 contacts ATP; that stretch reads GDRQTGKT.

This sequence belongs to the ATPase alpha/beta chains family. F-type ATPases have 2 components, CF(1) - the catalytic core - and CF(0) - the membrane proton channel. CF(1) has five subunits: alpha(3), beta(3), gamma(1), delta(1), epsilon(1). CF(0) has three main subunits: a(1), b(2) and c(9-12). The alpha and beta chains form an alternating ring which encloses part of the gamma chain. CF(1) is attached to CF(0) by a central stalk formed by the gamma and epsilon chains, while a peripheral stalk is formed by the delta and b chains.

Its subcellular location is the cell inner membrane. It carries out the reaction ATP + H2O + 4 H(+)(in) = ADP + phosphate + 5 H(+)(out). Functionally, produces ATP from ADP in the presence of a proton gradient across the membrane. The alpha chain is a regulatory subunit. The protein is ATP synthase subunit alpha of Acidiphilium cryptum (strain JF-5).